Consider the following 123-residue polypeptide: Small ribosomal subunit protein uS12cz/uS12cy (123 aa).

The protein belongs to the universal ribosomal protein uS12 family. As to quaternary structure, part of the 30S ribosomal subunit.

The protein localises to the plastid. It is found in the chloroplast. With S4 and S5 plays an important role in translational accuracy. Located at the interface of the 30S and 50S subunits. This Drimys granadensis protein is Small ribosomal subunit protein uS12cz/uS12cy (rps12-A).